Reading from the N-terminus, the 515-residue chain is Histidine ammonia-lyase (515 aa).

The segment at residues A145 to G147 is a cross-link (5-imidazolinone (Ala-Gly)). S146 carries the 2,3-didehydroalanine (Ser) modification.

It belongs to the PAL/histidase family. In terms of processing, contains an active site 4-methylidene-imidazol-5-one (MIO), which is formed autocatalytically by cyclization and dehydration of residues Ala-Ser-Gly.

It localises to the cytoplasm. The enzyme catalyses L-histidine = trans-urocanate + NH4(+). It participates in amino-acid degradation; L-histidine degradation into L-glutamate; N-formimidoyl-L-glutamate from L-histidine: step 1/3. The protein is Histidine ammonia-lyase of Gluconacetobacter diazotrophicus (strain ATCC 49037 / DSM 5601 / CCUG 37298 / CIP 103539 / LMG 7603 / PAl5).